We begin with the raw amino-acid sequence, 472 residues long: Protein nucleotidyltransferase YdiU (472 aa).

Positions 86, 88, 89, 109, 121, 122, 172, and 179 each coordinate ATP. The active-site Proton acceptor is Asp-244. The Mg(2+) site is built by Asn-245 and Asp-254. ATP is bound at residue Asp-254.

This sequence belongs to the SELO family. It depends on Mg(2+) as a cofactor. Requires Mn(2+) as cofactor.

The catalysed reaction is L-seryl-[protein] + ATP = 3-O-(5'-adenylyl)-L-seryl-[protein] + diphosphate. The enzyme catalyses L-threonyl-[protein] + ATP = 3-O-(5'-adenylyl)-L-threonyl-[protein] + diphosphate. It catalyses the reaction L-tyrosyl-[protein] + ATP = O-(5'-adenylyl)-L-tyrosyl-[protein] + diphosphate. It carries out the reaction L-histidyl-[protein] + UTP = N(tele)-(5'-uridylyl)-L-histidyl-[protein] + diphosphate. The catalysed reaction is L-seryl-[protein] + UTP = O-(5'-uridylyl)-L-seryl-[protein] + diphosphate. The enzyme catalyses L-tyrosyl-[protein] + UTP = O-(5'-uridylyl)-L-tyrosyl-[protein] + diphosphate. Its function is as follows. Nucleotidyltransferase involved in the post-translational modification of proteins. It can catalyze the addition of adenosine monophosphate (AMP) or uridine monophosphate (UMP) to a protein, resulting in modifications known as AMPylation and UMPylation. The chain is Protein nucleotidyltransferase YdiU from Ruegeria sp. (strain TM1040) (Silicibacter sp.).